A 428-amino-acid chain; its full sequence is MQLLTIGINHHTAPVALRERVAFPLEQIKPALDTFKSIWLGPSARTAPEAAILSTCNRTELYCATDDQAAREAAIQWLSRYHNLPIGELAPHVYALPQSEAVRHAFRVASGLDSMVLGETQIVGQMKDAVRTASEAGALGTYLNQLFQRTFAVAKEVRSTTEIGAQSVSMAAAAVRLAQRIFDKVANQRVLFIGAGEMIELCATHFAAQQPKELVVANRTAERGTRLAERFNGRAIPLSELPSRMHEFDIIVSCTASTLPIIGLGAVERAVKARRHRPIFMVDLAVPRDIEPEVGQLEDVFLYTVDDLGAIVREGNASRQAAVAQAEAIIETRVQNFMQWLDARSIVPVIRHMHTQADVLRRAEVERAQKMLARGDDPAAVLEALSQALTNKLIHGPTHALNRASSENRDTLIELMSGFYKHSGSTER.

Substrate contacts are provided by residues 55–58 (TCNR), S114, 119–121 (ETQ), and Q125. Catalysis depends on C56, which acts as the Nucleophile. NADP(+) is bound at residue 194–199 (GAGEMI).

It belongs to the glutamyl-tRNA reductase family. As to quaternary structure, homodimer.

It carries out the reaction (S)-4-amino-5-oxopentanoate + tRNA(Glu) + NADP(+) = L-glutamyl-tRNA(Glu) + NADPH + H(+). The protein operates within porphyrin-containing compound metabolism; protoporphyrin-IX biosynthesis; 5-aminolevulinate from L-glutamyl-tRNA(Glu): step 1/2. Its function is as follows. Catalyzes the NADPH-dependent reduction of glutamyl-tRNA(Glu) to glutamate 1-semialdehyde (GSA). The polypeptide is Glutamyl-tRNA reductase (Paraburkholderia xenovorans (strain LB400)).